Consider the following 138-residue polypeptide: Small ribosomal subunit protein uS11c (138 aa).

Residues Met1–Ala22 form a disordered region. Positions Arg12 to Ala22 are enriched in basic residues.

The protein belongs to the universal ribosomal protein uS11 family. As to quaternary structure, part of the 30S ribosomal subunit.

The protein resides in the plastid. The protein localises to the chloroplast. This Fagopyrum esculentum subsp. ancestrale (Wild buckwheat) protein is Small ribosomal subunit protein uS11c.